A 451-amino-acid chain; its full sequence is Photosystem II CP43 reaction center protein (451 aa).

Residues 1-46 are Cytoplasmic-facing; that stretch reads ATNRDQESSGFAWWAGNARLINLSGKLLGAHVAHAGLIVFWAGAMT. 3 residues coordinate chlorophyll a: W13, L27, and A30. The helical transmembrane segment at 47–71 threads the bilayer; sequence LFELAHFIPEKPMYEQGLILIPHIA. The Lumenal segment spans residues 72-111; the sequence is TLGWGVGPGGEVVDTFPFFVVGVVHLISSAVLGFGGVYHA. Positions 92 and 106 each coordinate chlorophyll a. The helical transmembrane segment at 112-133 threads the bilayer; it reads IRGPETLEEYSSFFGYDWKDKN. Residues 134–155 lie on the Cytoplasmic side of the membrane; sequence KMTTILGFHLIVLGIGALLLVA. Residue I138 coordinates chlorophyll a. Residues 156 to 178 traverse the membrane as a helical segment; the sequence is KAMFFGGLYDTWAPGGGDVRVIT. The Lumenal segment spans residues 179–232; that stretch reads NPTLDPRVIFGYLLKSPFGGEGWIVSVNNLEDVVGGHIWIGLICIAGGIWHILT. Chlorophyll a-binding residues include V211 and G225. A helical transmembrane segment spans residues 233-253; the sequence is TPFGWARRAFIWSGEAYLSYS. The Cytoplasmic portion of the chain corresponds to 254-268; the sequence is LGALSMMGFIATCFV. The helical transmembrane segment at 269 to 290 threads the bilayer; that stretch reads WFNNTVYPSEFYGPTGPEASQA. Residues 291–424 are Lumenal-facing; the sequence is QAMTFLIRDQ…FLVGHLWHAG (134 aa). E345 contacts [CaMn4O5] cluster. Chlorophyll a is bound by residues L404, F415, and G418. Residues 425–449 form a helical membrane-spanning segment; the sequence is RARAAAAGFEKGIDRESEPVLSMPS. Topologically, residues 450-451 are cytoplasmic; it reads LD.

It belongs to the PsbB/PsbC family. PsbC subfamily. As to quaternary structure, PSII is composed of 1 copy each of membrane proteins PsbA, PsbB, PsbC, PsbD, PsbE, PsbF, PsbH, PsbI, PsbJ, PsbK, PsbL, PsbM, PsbT, PsbX, PsbY, PsbZ, Psb30/Ycf12, peripheral proteins PsbO, CyanoQ (PsbQ), PsbU, PsbV and a large number of cofactors. It forms dimeric complexes. It depends on Binds multiple chlorophylls and provides some of the ligands for the Ca-4Mn-5O cluster of the oxygen-evolving complex. It may also provide a ligand for a Cl- that is required for oxygen evolution. PSII binds additional chlorophylls, carotenoids and specific lipids. as a cofactor.

The protein resides in the cellular thylakoid membrane. In terms of biological role, one of the components of the core complex of photosystem II (PSII). It binds chlorophyll and helps catalyze the primary light-induced photochemical processes of PSII. PSII is a light-driven water:plastoquinone oxidoreductase, using light energy to abstract electrons from H(2)O, generating O(2) and a proton gradient subsequently used for ATP formation. The chain is Photosystem II CP43 reaction center protein from Thermostichus vulcanus (Synechococcus vulcanus).